A 286-amino-acid chain; its full sequence is Pyridoxal kinase PdxY (286 aa).

Residues Ser9 and 44 to 45 contribute to the substrate site; that span reads TQ. ATP contacts are provided by residues Asp111, Ala143, Glu148, Lys181, and 208–211; that span reads RPLV. A substrate-binding site is contributed by Asp223.

The protein belongs to the pyridoxine kinase family. PdxY subfamily. As to quaternary structure, homodimer. The cofactor is Mg(2+).

It catalyses the reaction pyridoxal + ATP = pyridoxal 5'-phosphate + ADP + H(+). It functions in the pathway cofactor metabolism; pyridoxal 5'-phosphate salvage; pyridoxal 5'-phosphate from pyridoxal: step 1/1. Functionally, pyridoxal kinase involved in the salvage pathway of pyridoxal 5'-phosphate (PLP). Catalyzes the phosphorylation of pyridoxal to PLP. This chain is Pyridoxal kinase PdxY, found in Yersinia pestis bv. Antiqua (strain Antiqua).